Reading from the N-terminus, the 416-residue chain is Phakinin (416 aa).

The interval 1–48 (MSKRRVAADLPSGTNSSMPVQRHRVSSLRGTHSPSSLDSPPASRTSAV) is disordered. S2 is modified (N-acetylserine). Residues 2–115 (SKRRVAADLP…HTTVEDLGGC (114 aa)) are head. Residues S27, S33, S36, and S91 each carry the phosphoserine modification. Residues 28–48 (LRGTHSPSSLDSPPASRTSAV) show a composition bias toward polar residues. The region spanning 105 to 416 (DHTTVEDLGG…HALLDREENN (312 aa)) is the IF rod domain. 3 coiled-coil regions span residues 116–146 (LVEY…SKAK), 170–249 (LENA…VKVL), and 308–402 (QTQE…LQKD). Residues 397 to 416 (SQLQKDVASYHALLDREENN) form a tail region.

It belongs to the intermediate filament family. Part of a complex required for lens intermediate filament formation composed of BFSP1, BFSP2 and CRYAA. Found in a complex composed of PPL (via C-terminal linker domain), BFSP1 and BFSP2 in the retinal lens. Within the complex interacts with PPL (via C-terminal linker domain) and with BFSP1. Identified in a complex that contains VIM, EZR, AHNAK, BFSP1, BFSP2, ANK2, PLEC, PRX and spectrin. Interacts with LGSN. Interacts with VIM. In terms of tissue distribution, detected in retina lens fiber cells (at protein level). Also expressed in the lens epithelium, abundantly expressed in the anterior and anterolateral epithelium, less frequently expressed nearer the lens coronal equator (at protein level).

The protein resides in the cell membrane. It is found in the cytoplasm. It localises to the cytoskeleton. The protein localises to the cell cortex. Functionally, required for the correct formation of lens intermediate filaments as part of a complex composed of BFSP1, BFSP2 and CRYAA. Plays a role in maintenance of retinal lens optical clarity. In Mus musculus (Mouse), this protein is Phakinin (Bfsp2).